Here is a 184-residue protein sequence, read N- to C-terminus: Adenylate kinase 1 (184 aa).

Residue 11 to 16 coordinates ATP; sequence GAGKGT. The segment at 31 to 60 is NMP; that stretch reads STGDILRQAMKEQTPLGIKAQSYVDSGELV. AMP is bound by residues Thr-32, Arg-37, 58 to 60, 86 to 89, and Gln-93; these read ELV and GFPR. Residues 127 to 133 are LID; it reads SRGRKDD. Residue Arg-128 coordinates ATP. AMP-binding residues include Arg-130 and Arg-141. Gln-169 contacts ATP.

It belongs to the adenylate kinase family. Monomer.

It is found in the cytoplasm. The catalysed reaction is AMP + ATP = 2 ADP. The protein operates within purine metabolism; AMP biosynthesis via salvage pathway; AMP from ADP: step 1/1. Functionally, catalyzes the reversible transfer of the terminal phosphate group between ATP and AMP. Plays an important role in cellular energy homeostasis and in adenine nucleotide metabolism. This is Adenylate kinase 1 from Nostoc sp. (strain PCC 7120 / SAG 25.82 / UTEX 2576).